Reading from the N-terminus, the 177-residue chain is ATP synthase subunit delta (177 aa).

The protein belongs to the ATPase delta chain family. F-type ATPases have 2 components, F(1) - the catalytic core - and F(0) - the membrane proton channel. F(1) has five subunits: alpha(3), beta(3), gamma(1), delta(1), epsilon(1). F(0) has three main subunits: a(1), b(2) and c(10-14). The alpha and beta chains form an alternating ring which encloses part of the gamma chain. F(1) is attached to F(0) by a central stalk formed by the gamma and epsilon chains, while a peripheral stalk is formed by the delta and b chains.

It is found in the cell inner membrane. In terms of biological role, f(1)F(0) ATP synthase produces ATP from ADP in the presence of a proton or sodium gradient. F-type ATPases consist of two structural domains, F(1) containing the extramembraneous catalytic core and F(0) containing the membrane proton channel, linked together by a central stalk and a peripheral stalk. During catalysis, ATP synthesis in the catalytic domain of F(1) is coupled via a rotary mechanism of the central stalk subunits to proton translocation. Its function is as follows. This protein is part of the stalk that links CF(0) to CF(1). It either transmits conformational changes from CF(0) to CF(1) or is implicated in proton conduction. This is ATP synthase subunit delta from Actinobacillus pleuropneumoniae serotype 7 (strain AP76).